Here is a 1119-residue protein sequence, read N- to C-terminus: DNA-directed RNA polymerase subunit beta (1119 aa).

It belongs to the RNA polymerase beta chain family. As to quaternary structure, the RNAP catalytic core consists of 2 alpha, 1 beta, 1 beta' and 1 omega subunit. When a sigma factor is associated with the core the holoenzyme is formed, which can initiate transcription.

The enzyme catalyses RNA(n) + a ribonucleoside 5'-triphosphate = RNA(n+1) + diphosphate. DNA-dependent RNA polymerase catalyzes the transcription of DNA into RNA using the four ribonucleoside triphosphates as substrates. The chain is DNA-directed RNA polymerase subunit beta from Thermus aquaticus.